A 483-amino-acid chain; its full sequence is Probable ATP-dependent RNA helicase DDX49 (483 aa).

A Q motif motif is present at residues 2 to 30 (AGFAELGLSSWLVEQCRQLGLKQPTPVQL). The Helicase ATP-binding domain occupies 33–207 (IPAILEGRDC…GLATNQPFFW (175 aa)). 46–53 (AKTGSGKT) is a binding site for ATP. The DEAD box motif lies at 152–155 (DEAD). The Helicase C-terminal domain maps to 218-382 (QLDQRYLLVP…EFSVEEAEVL (165 aa)). Residues 444 to 483 (KEKVEETLKRQKAGRAGHKGRPPRTPSGSHSGPVPSQGLV) form a disordered region. The span at 453–465 (RQKAGRAGHKGRP) shows a compositional bias: basic residues.

It belongs to the DEAD box helicase family. DDX49/DBP8 subfamily.

It is found in the nucleus. The protein resides in the nucleolus. The enzyme catalyses ATP + H2O = ADP + phosphate + H(+). ATP-dependent RNA helicase that plays a role in various aspects of RNA metabolism including the regulation of mRNA export and the levels of pre-ribosomal RNA. Regulates the stability and synthesis of pre-ribosomal RNA and thereby regulates cell proliferation. Also possesses antiviral activity by recognizing gammaherpesvirus transcripts in the context of lytic reactivation. The chain is Probable ATP-dependent RNA helicase DDX49 (DDX49) from Homo sapiens (Human).